A 283-amino-acid chain; its full sequence is Bifunctional protein FolD 2 (283 aa).

Residues 165-167, Thr192, and Val233 each bind NADP(+); that span reads GRG.

Belongs to the tetrahydrofolate dehydrogenase/cyclohydrolase family. Homodimer.

The enzyme catalyses (6R)-5,10-methylene-5,6,7,8-tetrahydrofolate + NADP(+) = (6R)-5,10-methenyltetrahydrofolate + NADPH. The catalysed reaction is (6R)-5,10-methenyltetrahydrofolate + H2O = (6R)-10-formyltetrahydrofolate + H(+). Its pathway is one-carbon metabolism; tetrahydrofolate interconversion. Functionally, catalyzes the oxidation of 5,10-methylenetetrahydrofolate to 5,10-methenyltetrahydrofolate and then the hydrolysis of 5,10-methenyltetrahydrofolate to 10-formyltetrahydrofolate. The protein is Bifunctional protein FolD 2 of Nocardioides sp. (strain ATCC BAA-499 / JS614).